Here is a 404-residue protein sequence, read N- to C-terminus: Phosphopentomutase (404 aa).

Positions 10, 303, 308, 344, 345, and 356 each coordinate Mn(2+).

The protein belongs to the phosphopentomutase family. The cofactor is Mn(2+).

It localises to the cytoplasm. The enzyme catalyses 2-deoxy-alpha-D-ribose 1-phosphate = 2-deoxy-D-ribose 5-phosphate. The catalysed reaction is alpha-D-ribose 1-phosphate = D-ribose 5-phosphate. Its pathway is carbohydrate degradation; 2-deoxy-D-ribose 1-phosphate degradation; D-glyceraldehyde 3-phosphate and acetaldehyde from 2-deoxy-alpha-D-ribose 1-phosphate: step 1/2. Functionally, isomerase that catalyzes the conversion of deoxy-ribose 1-phosphate (dRib-1-P) and ribose 1-phosphate (Rib-1-P) to deoxy-ribose 5-phosphate (dRib-5-P) and ribose 5-phosphate (Rib-5-P), respectively. In Shewanella sp. (strain W3-18-1), this protein is Phosphopentomutase.